Consider the following 331-residue polypeptide: 2-isopropylmalate synthase (331 aa).

Positions Arg1–Tyr80 constitute a Pyruvate carboxyltransferase domain. The Mn(2+) site is built by His15, His17, and Asn51. Residues Gln205–Val331 form a regulatory domain region.

Belongs to the alpha-IPM synthase/homocitrate synthase family. LeuA type 1 subfamily. As to quaternary structure, homotetramer. Requires Mn(2+) as cofactor.

The protein localises to the cytoplasm. It carries out the reaction 3-methyl-2-oxobutanoate + acetyl-CoA + H2O = (2S)-2-isopropylmalate + CoA + H(+). Its pathway is amino-acid biosynthesis; L-leucine biosynthesis; L-leucine from 3-methyl-2-oxobutanoate: step 1/4. In terms of biological role, catalyzes the condensation of the acetyl group of acetyl-CoA with 3-methyl-2-oxobutanoate (2-oxoisovalerate) to form 3-carboxy-3-hydroxy-4-methylpentanoate (2-isopropylmalate). The sequence is that of 2-isopropylmalate synthase from Thermus thermophilus.